We begin with the raw amino-acid sequence, 933 residues long: Phospholipase D2 (933 aa).

2 disordered regions span residues 1–20 (MAATPQSLFPSGDDLDSSQL) and 134–160 (SPAPEGDSREIPSLPRAGPEGSSRRTA). In terms of domain architecture, PX spans 65 to 195 (VIAQVVGTER…TEFLEVSQLS (131 aa)). The PH domain occupies 203-311 (KGLEGVIRKR…WAQEITELAQ (109 aa)). PLD phosphodiesterase domains lie at 437–464 (TLWAHHEKLLVVDQVVAFLGGLDLAYGR) and 751–778 (ELIYIHSKMLIADDRTVIIGSANINDRS). The interval 441-788 (HHEKLLVVDQ…LLGKRDSELA (348 aa)) is catalytic.

The protein belongs to the phospholipase D family. Interacts with PIP5K1B. Interacts with EGFR. Phosphorylated by FGR.

It is found in the cell membrane. The enzyme catalyses a 1,2-diacyl-sn-glycero-3-phosphocholine + H2O = a 1,2-diacyl-sn-glycero-3-phosphate + choline + H(+). The catalysed reaction is 1,2-dihexadecanoyl-sn-glycero-3-phosphocholine + H2O = 1,2-dihexadecanoyl-sn-glycero-3-phosphate + choline + H(+). Its function is as follows. Function as phospholipase selective for phosphatidylcholine. May have a role in signal-induced cytoskeletal regulation and/or endocytosis. This chain is Phospholipase D2 (PLD2), found in Bos taurus (Bovine).